Consider the following 201-residue polypeptide: 3-isopropylmalate dehydratase small subunit (201 aa).

This sequence belongs to the LeuD family. LeuD type 1 subfamily. Heterodimer of LeuC and LeuD.

The catalysed reaction is (2R,3S)-3-isopropylmalate = (2S)-2-isopropylmalate. It functions in the pathway amino-acid biosynthesis; L-leucine biosynthesis; L-leucine from 3-methyl-2-oxobutanoate: step 2/4. In terms of biological role, catalyzes the isomerization between 2-isopropylmalate and 3-isopropylmalate, via the formation of 2-isopropylmaleate. This is 3-isopropylmalate dehydratase small subunit from Ruegeria pomeroyi (strain ATCC 700808 / DSM 15171 / DSS-3) (Silicibacter pomeroyi).